Consider the following 102-residue polypeptide: Small ribosomal subunit protein uS10 (102 aa).

It belongs to the universal ribosomal protein uS10 family. Part of the 30S ribosomal subunit.

Involved in the binding of tRNA to the ribosomes. This Thermococcus kodakarensis (strain ATCC BAA-918 / JCM 12380 / KOD1) (Pyrococcus kodakaraensis (strain KOD1)) protein is Small ribosomal subunit protein uS10.